The following is a 260-amino-acid chain: uncharacterized protein (260 aa).

The stretch at 214-252 forms a coiled coil; it reads IHQFIETEIERIMEAAKELKAEKKDMTSELNRLLLNTVE.

This is an uncharacterized protein from Bacillus subtilis (strain 168).